We begin with the raw amino-acid sequence, 525 residues long: GMP synthase [glutamine-hydrolyzing] (525 aa).

The region spanning 9-207 (RILILDFGSQ…VRDICQCEAL (199 aa)) is the Glutamine amidotransferase type-1 domain. Cys-86 functions as the Nucleophile in the catalytic mechanism. Active-site residues include His-181 and Glu-183. The GMPS ATP-PPase domain occupies 208-400 (WTPAKIIDDA…LGLPYDMLYR (193 aa)). ATP is bound at residue 235-241 (SGGVDSS).

As to quaternary structure, homodimer.

The enzyme catalyses XMP + L-glutamine + ATP + H2O = GMP + L-glutamate + AMP + diphosphate + 2 H(+). Its pathway is purine metabolism; GMP biosynthesis; GMP from XMP (L-Gln route): step 1/1. Catalyzes the synthesis of GMP from XMP. The sequence is that of GMP synthase [glutamine-hydrolyzing] from Salmonella paratyphi B (strain ATCC BAA-1250 / SPB7).